The primary structure comprises 372 residues: 4-hydroxy-3-methylbut-2-en-1-yl diphosphate synthase (flavodoxin) (372 aa).

Residues C270, C273, C305, and E312 each coordinate [4Fe-4S] cluster.

The protein belongs to the IspG family. The cofactor is [4Fe-4S] cluster.

It catalyses the reaction (2E)-4-hydroxy-3-methylbut-2-enyl diphosphate + oxidized [flavodoxin] + H2O + 2 H(+) = 2-C-methyl-D-erythritol 2,4-cyclic diphosphate + reduced [flavodoxin]. It participates in isoprenoid biosynthesis; isopentenyl diphosphate biosynthesis via DXP pathway; isopentenyl diphosphate from 1-deoxy-D-xylulose 5-phosphate: step 5/6. Functionally, converts 2C-methyl-D-erythritol 2,4-cyclodiphosphate (ME-2,4cPP) into 1-hydroxy-2-methyl-2-(E)-butenyl 4-diphosphate. The chain is 4-hydroxy-3-methylbut-2-en-1-yl diphosphate synthase (flavodoxin) from Salmonella gallinarum (strain 287/91 / NCTC 13346).